The sequence spans 534 residues: Glucans biosynthesis protein D (534 aa).

The segment at residues 1–28 is a signal peptide (tat-type signal); sequence MYRRDFLKSVTAAWVAFGLPNPLGGAFA.

It belongs to the OpgD/OpgG family. Predicted to be exported by the Tat system. The position of the signal peptide cleavage has not been experimentally proven.

It localises to the periplasm. The protein operates within glycan metabolism; osmoregulated periplasmic glucan (OPG) biosynthesis. Its function is as follows. Probably involved in the control of the structural glucose backbone of osmoregulated periplasmic glucans (OPGs). The protein is Glucans biosynthesis protein D of Xylella fastidiosa (strain M23).